A 67-amino-acid polypeptide reads, in one-letter code: ATP synthase F(0) complex subunit 8 (67 aa).

The chain crosses the membrane as a helical span at residues 8–24 (TWFTTILSTSFSIIHRL). At lysine 54 the chain carries N6-acetyllysine; alternate. Residue lysine 54 is modified to N6-succinyllysine; alternate. Lysine 57 is modified (N6-acetyllysine).

The protein belongs to the ATPase protein 8 family. Component of the ATP synthase complex composed at least of ATP5F1A/subunit alpha, ATP5F1B/subunit beta, ATP5MC1/subunit c (homooctomer), MT-ATP6/subunit a, MT-ATP8/subunit 8, ATP5ME/subunit e, ATP5MF/subunit f, ATP5MG/subunit g, ATP5MK/subunit k, ATP5MJ/subunit j, ATP5F1C/subunit gamma, ATP5F1D/subunit delta, ATP5F1E/subunit epsilon, ATP5PF/subunit F6, ATP5PB/subunit b, ATP5PD/subunit d, ATP5PO/subunit OSCP. ATP synthase complex consists of a soluble F(1) head domain (subunits alpha(3) and beta(3)) - the catalytic core - and a membrane F(0) domain - the membrane proton channel (subunits c, a, 8, e, f, g, k and j). These two domains are linked by a central stalk (subunits gamma, delta, and epsilon) rotating inside the F1 region and a stationary peripheral stalk (subunits F6, b, d, and OSCP). Interacts with PRICKLE3.

It localises to the mitochondrion membrane. Subunit 8, of the mitochondrial membrane ATP synthase complex (F(1)F(0) ATP synthase or Complex V) that produces ATP from ADP in the presence of a proton gradient across the membrane which is generated by electron transport complexes of the respiratory chain. ATP synthase complex consist of a soluble F(1) head domain - the catalytic core - and a membrane F(1) domain - the membrane proton channel. These two domains are linked by a central stalk rotating inside the F(1) region and a stationary peripheral stalk. During catalysis, ATP synthesis in the catalytic domain of F(1) is coupled via a rotary mechanism of the central stalk subunits to proton translocation. In vivo, can only synthesize ATP although its ATP hydrolase activity can be activated artificially in vitro. Part of the complex F(0) domain. The chain is ATP synthase F(0) complex subunit 8 from Glis glis (Fat dormouse).